The primary structure comprises 159 residues: Phosphopantetheine adenylyltransferase (159 aa).

Position 10 (T10) interacts with substrate. Residues T10–F11 and H18 contribute to the ATP site. Substrate-binding residues include K42, M74, and R88. Residues G89–R91, E99, and W124–S130 each bind ATP.

This sequence belongs to the bacterial CoaD family. As to quaternary structure, homohexamer. Mg(2+) serves as cofactor.

Its subcellular location is the cytoplasm. The catalysed reaction is (R)-4'-phosphopantetheine + ATP + H(+) = 3'-dephospho-CoA + diphosphate. It functions in the pathway cofactor biosynthesis; coenzyme A biosynthesis; CoA from (R)-pantothenate: step 4/5. Reversibly transfers an adenylyl group from ATP to 4'-phosphopantetheine, yielding dephospho-CoA (dPCoA) and pyrophosphate. The polypeptide is Phosphopantetheine adenylyltransferase (Escherichia coli O7:K1 (strain IAI39 / ExPEC)).